The following is a 316-amino-acid chain: 4-hydroxy-3-methylbut-2-enyl diphosphate reductase (316 aa).

Cysteine 12 contributes to the [4Fe-4S] cluster binding site. (2E)-4-hydroxy-3-methylbut-2-enyl diphosphate contacts are provided by histidine 41 and histidine 74. Dimethylallyl diphosphate contacts are provided by histidine 41 and histidine 74. Residues histidine 41 and histidine 74 each coordinate isopentenyl diphosphate. Cysteine 96 lines the [4Fe-4S] cluster pocket. Histidine 124 provides a ligand contact to (2E)-4-hydroxy-3-methylbut-2-enyl diphosphate. Residue histidine 124 coordinates dimethylallyl diphosphate. Histidine 124 serves as a coordination point for isopentenyl diphosphate. The active-site Proton donor is the glutamate 126. Threonine 167 provides a ligand contact to (2E)-4-hydroxy-3-methylbut-2-enyl diphosphate. Cysteine 197 is a binding site for [4Fe-4S] cluster. The (2E)-4-hydroxy-3-methylbut-2-enyl diphosphate site is built by serine 225, serine 226, asparagine 227, and serine 269. Dimethylallyl diphosphate-binding residues include serine 225, serine 226, asparagine 227, and serine 269. Isopentenyl diphosphate contacts are provided by serine 225, serine 226, asparagine 227, and serine 269.

Belongs to the IspH family. In terms of assembly, homodimer. The cofactor is [4Fe-4S] cluster.

The catalysed reaction is isopentenyl diphosphate + 2 oxidized [2Fe-2S]-[ferredoxin] + H2O = (2E)-4-hydroxy-3-methylbut-2-enyl diphosphate + 2 reduced [2Fe-2S]-[ferredoxin] + 2 H(+). The enzyme catalyses dimethylallyl diphosphate + 2 oxidized [2Fe-2S]-[ferredoxin] + H2O = (2E)-4-hydroxy-3-methylbut-2-enyl diphosphate + 2 reduced [2Fe-2S]-[ferredoxin] + 2 H(+). The protein operates within isoprenoid biosynthesis; dimethylallyl diphosphate biosynthesis; dimethylallyl diphosphate from (2E)-4-hydroxy-3-methylbutenyl diphosphate: step 1/1. It participates in isoprenoid biosynthesis; isopentenyl diphosphate biosynthesis via DXP pathway; isopentenyl diphosphate from 1-deoxy-D-xylulose 5-phosphate: step 6/6. Catalyzes the conversion of 1-hydroxy-2-methyl-2-(E)-butenyl 4-diphosphate (HMBPP) into a mixture of isopentenyl diphosphate (IPP) and dimethylallyl diphosphate (DMAPP). Acts in the terminal step of the DOXP/MEP pathway for isoprenoid precursor biosynthesis. In Escherichia coli (strain UTI89 / UPEC), this protein is 4-hydroxy-3-methylbut-2-enyl diphosphate reductase.